A 553-amino-acid chain; its full sequence is Hydroxylamine reductase (553 aa).

[2Fe-2S] cluster is bound by residues Cys-3, Cys-6, Cys-18, and Cys-25. The hybrid [4Fe-2O-2S] cluster site is built by His-249, Glu-273, Cys-317, Cys-405, Cys-433, Cys-459, Glu-493, and Lys-495. Cys-405 is modified (cysteine persulfide).

It belongs to the HCP family. [2Fe-2S] cluster is required as a cofactor. The cofactor is hybrid [4Fe-2O-2S] cluster.

The protein localises to the cytoplasm. The catalysed reaction is A + NH4(+) + H2O = hydroxylamine + AH2 + H(+). In terms of biological role, catalyzes the reduction of hydroxylamine to form NH(3) and H(2)O. The protein is Hydroxylamine reductase of Mannheimia succiniciproducens (strain KCTC 0769BP / MBEL55E).